The sequence spans 188 residues: dCTP deaminase (188 aa).

Residues 111 to 116, 135 to 137, glutamine 156, tyrosine 170, and glutamine 180 contribute to the dCTP site; these read KSTYAR and TLE. The active-site Proton donor/acceptor is the glutamate 137.

It belongs to the dCTP deaminase family. Homotrimer.

It catalyses the reaction dCTP + H2O + H(+) = dUTP + NH4(+). It functions in the pathway pyrimidine metabolism; dUMP biosynthesis; dUMP from dCTP (dUTP route): step 1/2. Functionally, catalyzes the deamination of dCTP to dUTP. This Cupriavidus metallidurans (strain ATCC 43123 / DSM 2839 / NBRC 102507 / CH34) (Ralstonia metallidurans) protein is dCTP deaminase.